Here is a 420-residue protein sequence, read N- to C-terminus: Gamma-glutamyl phosphate reductase (420 aa).

It belongs to the gamma-glutamyl phosphate reductase family.

It is found in the cytoplasm. It carries out the reaction L-glutamate 5-semialdehyde + phosphate + NADP(+) = L-glutamyl 5-phosphate + NADPH + H(+). It participates in amino-acid biosynthesis; L-proline biosynthesis; L-glutamate 5-semialdehyde from L-glutamate: step 2/2. Its function is as follows. Catalyzes the NADPH-dependent reduction of L-glutamate 5-phosphate into L-glutamate 5-semialdehyde and phosphate. The product spontaneously undergoes cyclization to form 1-pyrroline-5-carboxylate. This is Gamma-glutamyl phosphate reductase from Laribacter hongkongensis (strain HLHK9).